The chain runs to 378 residues: Anhydro-N-acetylmuramic acid kinase 2 (378 aa).

14-22 is an ATP binding site; it reads GTVLDGNID.

The protein belongs to the anhydro-N-acetylmuramic acid kinase family.

The enzyme catalyses 1,6-anhydro-N-acetyl-beta-muramate + ATP + H2O = N-acetyl-D-muramate 6-phosphate + ADP + H(+). It functions in the pathway amino-sugar metabolism; 1,6-anhydro-N-acetylmuramate degradation. It participates in cell wall biogenesis; peptidoglycan recycling. In terms of biological role, catalyzes the specific phosphorylation of 1,6-anhydro-N-acetylmuramic acid (anhMurNAc) with the simultaneous cleavage of the 1,6-anhydro ring, generating MurNAc-6-P. Is required for the utilization of anhMurNAc either imported from the medium or derived from its own cell wall murein, and thus plays a role in cell wall recycling. The chain is Anhydro-N-acetylmuramic acid kinase 2 from Jannaschia sp. (strain CCS1).